A 132-amino-acid chain; its full sequence is Small ribosomal subunit protein uS11 (132 aa).

This sequence belongs to the universal ribosomal protein uS11 family. Part of the 30S ribosomal subunit. Interacts with proteins S7 and S18. Binds to IF-3.

Its function is as follows. Located on the platform of the 30S subunit, it bridges several disparate RNA helices of the 16S rRNA. Forms part of the Shine-Dalgarno cleft in the 70S ribosome. In Alkaliphilus metalliredigens (strain QYMF), this protein is Small ribosomal subunit protein uS11.